A 172-amino-acid chain; its full sequence is Neudesin (172 aa).

Positions 1–31 are cleaved as a signal peptide; the sequence is MVGPAPRRRLRPLAALALVLALAPGLPTARA. A Cytochrome b5 heme-binding domain is found at 44–129; sequence VRLFTEEELA…KELEALDEVF (86 aa). Residue K136 is modified to N6-acetyllysine. The segment at 151 to 172 is disordered; it reads DGSPNLDFKPEDQPHFDIKDEF. Residues 158–172 are compositionally biased toward basic and acidic residues; it reads FKPEDQPHFDIKDEF.

This sequence belongs to the cytochrome b5 family. MAPR subfamily. Interacts with PINK1 and PARK7. In terms of tissue distribution, ubiquitously expressed with high expression in heart. Over-expressed in various tumors including carcinomas of the uterine cervix, lymphoma, colon, lung, skin and leukemia, as well as carcinoma of the breast.

The protein localises to the secreted. Its subcellular location is the extracellular space. It localises to the mitochondrion. The protein resides in the endoplasmic reticulum. Its function is as follows. Acts as a neurotrophic factor in postnatal mature neurons enhancing neuronal survival. Promotes cell proliferation and neurogenesis in undifferentiated neural progenitor cells at the embryonic stage and inhibits differentiation of astrocytes. Its neurotrophic activity is exerted via MAPK1/ERK2, MAPK3/ERK1 and AKT1/AKT pathways. Neurotrophic activity is enhanced by binding to heme. Also acts as an anorexigenic neurotrophic factor that contributes to energy balance. The chain is Neudesin from Homo sapiens (Human).